A 530-amino-acid polypeptide reads, in one-letter code: Glutamate--cysteine ligase (530 aa).

Belongs to the glutamate--cysteine ligase type 1 family. Type 1 subfamily.

The catalysed reaction is L-cysteine + L-glutamate + ATP = gamma-L-glutamyl-L-cysteine + ADP + phosphate + H(+). It participates in sulfur metabolism; glutathione biosynthesis; glutathione from L-cysteine and L-glutamate: step 1/2. The sequence is that of Glutamate--cysteine ligase from Saccharophagus degradans (strain 2-40 / ATCC 43961 / DSM 17024).